A 263-amino-acid chain; its full sequence is tRNA1(Val) (adenine(37)-N6)-methyltransferase (263 aa).

Belongs to the methyltransferase superfamily. tRNA (adenine-N(6)-)-methyltransferase family.

It localises to the cytoplasm. The catalysed reaction is adenosine(37) in tRNA1(Val) + S-adenosyl-L-methionine = N(6)-methyladenosine(37) in tRNA1(Val) + S-adenosyl-L-homocysteine + H(+). Specifically methylates the adenine in position 37 of tRNA(1)(Val) (anticodon cmo5UAC). This Pseudoalteromonas atlantica (strain T6c / ATCC BAA-1087) protein is tRNA1(Val) (adenine(37)-N6)-methyltransferase.